A 286-amino-acid polypeptide reads, in one-letter code: Probable ketoamine kinase EAE_16955 (286 aa).

92 to 94 (EYL) contacts ATP. The active-site Proton acceptor is the Asp-194.

This sequence belongs to the fructosamine kinase family.

In terms of biological role, ketoamine kinase that phosphorylates ketoamines on the third carbon of the sugar moiety to generate ketoamine 3-phosphate. The chain is Probable ketoamine kinase EAE_16955 from Klebsiella aerogenes (strain ATCC 13048 / DSM 30053 / CCUG 1429 / JCM 1235 / KCTC 2190 / NBRC 13534 / NCIMB 10102 / NCTC 10006 / CDC 819-56) (Enterobacter aerogenes).